Here is a 184-residue protein sequence, read N- to C-terminus: Crossover junction endodeoxyribonuclease RuvC (184 aa).

Catalysis depends on residues Asp-11, Glu-73, and Asp-147. Mg(2+) is bound by residues Asp-11, Glu-73, and Asp-147.

The protein belongs to the RuvC family. In terms of assembly, homodimer which binds Holliday junction (HJ) DNA. The HJ becomes 2-fold symmetrical on binding to RuvC with unstacked arms; it has a different conformation from HJ DNA in complex with RuvA. In the full resolvosome a probable DNA-RuvA(4)-RuvB(12)-RuvC(2) complex forms which resolves the HJ. The cofactor is Mg(2+).

Its subcellular location is the cytoplasm. It carries out the reaction Endonucleolytic cleavage at a junction such as a reciprocal single-stranded crossover between two homologous DNA duplexes (Holliday junction).. Its function is as follows. The RuvA-RuvB-RuvC complex processes Holliday junction (HJ) DNA during genetic recombination and DNA repair. Endonuclease that resolves HJ intermediates. Cleaves cruciform DNA by making single-stranded nicks across the HJ at symmetrical positions within the homologous arms, yielding a 5'-phosphate and a 3'-hydroxyl group; requires a central core of homology in the junction. The consensus cleavage sequence is 5'-(A/T)TT(C/G)-3'. Cleavage occurs on the 3'-side of the TT dinucleotide at the point of strand exchange. HJ branch migration catalyzed by RuvA-RuvB allows RuvC to scan DNA until it finds its consensus sequence, where it cleaves and resolves the cruciform DNA. The chain is Crossover junction endodeoxyribonuclease RuvC from Neisseria gonorrhoeae (strain ATCC 700825 / FA 1090).